Consider the following 299-residue polypeptide: MEPPIPQSAPLTPNSVMVQPLLDSRMSHSRLQHPLTILPIDQVKTSHVENDYIDNPSLALTTGPKRTRGGAPELAPTPARCDQDVTHHWISFSGRPSSVSSSSSTSSDQRLLDHMAPPPVADQASPRAVRIQPKVVHCQPLDLKGPAVPPELDKHFLLCEACGKCKCKECASPRTLPSCWVCNQECLCSAQTLVNYGTCMCLVQGIFYHCTNEDDEGSCADHPCSCSRSNCCARWSFMGALSVVLPCLLCYLPATGCVKLAQRGYDRLRRPGCRCKHTNSVICKAASGDAKTSRPDKPF.

N-acetylmethionine is present on M1. Disordered regions lie at residues N55–A79 and F92–P126. Over residues F92–S107 the composition is skewed to low complexity. The residue at position 125 (S125) is a Phosphoserine. Positions K166–C273 constitute an SPR domain. The segment at V181–F299 is required for interaction with TESK1. Required for colocalization with TESK1 at vesicular spots in the cytoplasm and inhibition of TESK1 kinase activity, resulting in inhibition of cell spreading.

The protein belongs to the sprouty family. In terms of assembly, interacts (via C-terminus) with TESK1 (via both C- and N-termini); the interaction inhibits TESK1 kinase activity. Interacts with RAF1. Interacts with CAV1 (via C-terminus).

The protein resides in the cytoplasm. It localises to the cell projection. It is found in the ruffle membrane. Suppresses the insulin receptor and EGFR-transduced MAPK signaling pathway, but does not inhibit MAPK activation by a constitutively active mutant Ras. Probably impairs the formation of GTP-Ras. Inhibits Ras-independent, but not Ras-dependent, activation of RAF1. Represses integrin-mediated cell spreading via inhibition of TESK1-mediated phosphorylation of cofilin. This Homo sapiens (Human) protein is Protein sprouty homolog 4 (SPRY4).